The chain runs to 244 residues: RNA transcription, translation and transport factor protein (244 aa).

An N6-acetyllysine mark is found at K20, K62, and K98.

Belongs to the RTRAF family. Homodimer. Interacts with FAM98A (via N- and C-terminus). Interacts with NIN; which may prevent phosphorylation of NIN. Interacts with POLR2A. Component of a tRNA-splicing ligase complex.

Its subcellular location is the nucleus. It is found in the cytoplasm. The protein localises to the cytosol. It localises to the perinuclear region. The protein resides in the cytoskeleton. Its subcellular location is the microtubule organizing center. It is found in the centrosome. Its function is as follows. RNA-binding protein involved in modulation of mRNA transcription by Polymerase II. Component of the tRNA-splicing ligase complex and is required for tRNA ligation. May be required for RNA transport. This Mus musculus (Mouse) protein is RNA transcription, translation and transport factor protein.